The chain runs to 176 residues: Vitamin K epoxide reductase complex subunit 1-like protein 1 (176 aa).

The Cytoplasmic portion of the chain corresponds to 1–13 (MAAPVLLRVSVPR). The helical transmembrane segment at 14-36 (WERVARYAVCAAGILLSIYAYHV) threads the bilayer. The Lumenal portion of the chain corresponds to 37 to 87 (EREKERDPEHRALCDLGPWVKCSAALASRWGRGFGLLGSIFGKDGVLNQPN). An intrachain disulfide couples Cys-50 to Cys-58. Asn-87 provides a ligand contact to (S)-warfarin. A helical membrane pass occupies residues 88-102 (SVFGLIFYILQLLLG). Residues 103 to 107 (MTASA) lie on the Cytoplasmic side of the membrane. Residues 108–135 (VAALVLMTSSIVSVVGSLYLAYILYFVL) form a helical membrane-spanning segment. The Lumenal portion of the chain corresponds to 136–138 (KEF). Cys-139 and Cys-142 form a disulfide bridge. The helical transmembrane segment at 139–160 (CIICVTTYVLNFLLLIINYKRL) threads the bilayer. Phylloquinone-binding residues include Cys-142 and Tyr-146. Position 146 (Tyr-146) interacts with (S)-warfarin. At 161–176 (VYLNEAWKRQLQPKED) the chain is on the cytoplasmic side.

Belongs to the VKOR family. As to expression, detected in testis and lung.

Its subcellular location is the endoplasmic reticulum membrane. The enzyme catalyses phylloquinone + [protein]-disulfide + H2O = 2,3-epoxyphylloquinone + [protein]-dithiol. It catalyses the reaction phylloquinol + [protein]-disulfide = phylloquinone + [protein]-dithiol. Inhibited by warfarin (coumadin). Warfarin locks VKORC1 in both redox states into the closed conformation. Its function is as follows. Involved in vitamin K metabolism. Can reduce inactive vitamin K 2,3-epoxide to active vitamin K, and may contribute to vitamin K-mediated protection against oxidative stress. Plays a role in vitamin K-dependent gamma-carboxylation of Glu residues in target proteins. This Mus musculus (Mouse) protein is Vitamin K epoxide reductase complex subunit 1-like protein 1 (Vkorc1l1).